Consider the following 180-residue polypeptide: Secreted RxLR effector protein 19 (180 aa).

The N-terminal stretch at M1 to S19 is a signal peptide. The 147-residue stretch at F25–P171 folds into the Jacalin-type lectin domain. The RxLR-dEER signature appears at R52–N77.

This sequence belongs to the RxLR effector family.

The protein resides in the secreted. Its subcellular location is the host cytoplasm. The protein localises to the host nucleus. Functionally, effector that partially suppresses the tobacco programmed cell death induced by cell death-inducing proteins. In Plasmopara viticola (Downy mildew of grapevine), this protein is Secreted RxLR effector protein 19.